The chain runs to 92 residues: Bombyxin A-4 (92 aa).

The signal sequence occupies residues 1–19; it reads MKILLAIALMLSTVMWVST. Glutamine 20 carries the post-translational modification Pyrrolidone carboxylic acid. 3 disulfide bridges follow: cysteine 29–cysteine 79, cysteine 41–cysteine 92, and cysteine 78–cysteine 83. Positions 50 to 70 are cleaved as a propeptide — c peptide like; the sequence is SGAQFASYGSAWLMPYSEGRG.

The protein belongs to the insulin family. Heterodimer of a B chain and an A chain linked by two disulfide bonds.

The protein localises to the secreted. Brain peptide responsible for activation of prothoracic glands to produce ecdysone in insects. This chain is Bombyxin A-4 (BBXA4), found in Bombyx mori (Silk moth).